A 179-amino-acid chain; its full sequence is ATP-dependent protease subunit HslV (179 aa).

Thr-6 is an active-site residue. Ser-164, Cys-167, and Thr-170 together coordinate Na(+).

It belongs to the peptidase T1B family. HslV subfamily. In terms of assembly, a double ring-shaped homohexamer of HslV is capped on each side by a ring-shaped HslU homohexamer. The assembly of the HslU/HslV complex is dependent on binding of ATP.

The protein localises to the cytoplasm. The enzyme catalyses ATP-dependent cleavage of peptide bonds with broad specificity.. Allosterically activated by HslU binding. In terms of biological role, protease subunit of a proteasome-like degradation complex believed to be a general protein degrading machinery. This is ATP-dependent protease subunit HslV from Listeria innocua serovar 6a (strain ATCC BAA-680 / CLIP 11262).